Reading from the N-terminus, the 188-residue chain is Insulin-like growth factor 1 (188 aa).

The b stretch occupies residues Gly45–Thr73. Cystine bridges form between Cys50/Cys92, Cys62/Cys105, and Cys91/Cys96. The tract at residues Gly74–Arg85 is c. Positions Gly86 to Ala106 are a. Residues Pro107–Ala114 are d. A propeptide spans Arg115–Met188 (e peptide). The segment at Arg115–Met188 is disordered. The segment covering Arg140–Thr153 has biased composition (basic and acidic residues).

It belongs to the insulin family. As to expression, all the isoforms are expressed in embryos, juvenile and adult liver, muscle and brain. At least one isoform is expressed in heart, kidney, testes, ovary, adipose tissue and spleen of juvenile salmon.

Its subcellular location is the secreted. Functionally, the insulin-like growth factors, isolated from plasma, are structurally and functionally related to insulin but have a much higher growth-promoting activity. Acts as a ligand for IGF1R. Binds to the alpha subunit of IGF1R, leading to the activation of the intrinsic tyrosine kinase activity which autophosphorylates tyrosine residues in the beta subunit thus initiatiating a cascade of down-stream signaling events leading to activation of the PI3K-AKT/PKB and the Ras-MAPK pathways. Binds to integrins. Its binding to integrins and subsequent ternary complex formation with integrins and IGFR1 are essential for IGF1 signaling. The protein is Insulin-like growth factor 1 of Oncorhynchus kisutch (Coho salmon).